A 344-amino-acid chain; its full sequence is Beta-1,4-galactosyltransferase 4 (344 aa).

At Met-1–Arg-12 the chain is on the cytoplasmic side. A helical; Signal-anchor for type II membrane protein transmembrane segment spans residues Leu-13–Ile-38. Residues Gln-39 to Ala-344 are Lumenal-facing. Cys-77 and Cys-118 are oxidised to a cystine. UDP-alpha-D-galactose is bound by residues Pro-129–Arg-133, Phe-168–Arg-170, and Val-195–Asp-196. Residues Cys-189 and Cys-208 are joined by a disulfide bond. Asp-196 contacts Mn(2+). A glycan (N-linked (GlcNAc...) asparagine) is linked at Asn-220. UDP-alpha-D-galactose is bound by residues Tyr-224 and Trp-256. Position 258–261 (Gly-258–Asp-261) interacts with N-acetyl-D-glucosamine. His-289 serves as a coordination point for Mn(2+). A UDP-alpha-D-galactose-binding site is contributed by His-289 to Arg-291. Position 301 (Arg-301) interacts with N-acetyl-D-glucosamine. Residue Asn-335 is glycosylated (N-linked (GlcNAc...) asparagine).

The protein belongs to the glycosyltransferase 7 family. Interacts with SLC35A2/UGT1. Requires Mn(2+) as cofactor.

Its subcellular location is the golgi apparatus membrane. The protein resides in the secreted. It catalyses the reaction N-acetyl-D-glucosamine + UDP-alpha-D-galactose = beta-D-galactosyl-(1-&gt;4)-N-acetyl-D-glucosamine + UDP + H(+). The catalysed reaction is a beta-D-GlcNAc-(1-&gt;3)-beta-D-Gal-(1-&gt;4)-beta-D-Glc-(1&lt;-&gt;1)-Cer(d18:1(4E)) + UDP-alpha-D-galactose = a neolactoside nLc4Cer(d18:1(4E)) + UDP + H(+). The enzyme catalyses 3-O-{beta-D-galactosyl-(1-&gt;3)-[6-O-sulfo-N-acetyl-beta-D-glucosaminyl-(1-&gt;6)]-N-acetyl-alpha-D-galactosaminyl}-L-seryl-[protein] + UDP-alpha-D-galactose = 3-O-{beta-D-galactosyl-(1-&gt;3)-[beta-D-galactosyl-(1-&gt;4)-6-O-sulfo-N-acetyl-beta-D-glucosaminyl-(1-&gt;6)]-N-acetyl-alpha-D-galactosaminyl}-L-seryl-[protein] + UDP + H(+). It carries out the reaction 3-O-{beta-D-galactosyl-(1-&gt;3)-[6-O-sulfo-N-acetyl-beta-D-glucosaminyl-(1-&gt;6)]-N-acetyl-alpha-D-galactosaminyl}-L-threonyl-[protein] + UDP-alpha-D-galactose = 3-O-{beta-D-galactosyl-(1-&gt;3)-[beta-D-galactosyl-(1-&gt;4)-6-O-sulfo-N-acetyl-beta-D-glucosaminyl-(1-&gt;6)]-N-acetyl-alpha-D-galactosaminyl}-L-threonyl-[protein] + UDP + H(+). The protein operates within protein modification; protein glycosylation. Its pathway is glycolipid biosynthesis. In terms of biological role, galactose (Gal) transferase involved in the synthesis of terminal N-acetyllactosamine (LacNac) unit present on glycan chains of glycoproteins and glycosphingolipids. Catalyzes the transfer of Gal residue via a beta1-&gt;4 linkage from UDP-Gal to the non-reducing terminal N-acetyl glucosamine 6-O-sulfate (6-O-sulfoGlcNAc) in the linearly growing chain of both N- and O-linked keratan sulfate proteoglycans. Cooperates with B3GNT7 N-acetyl glucosamine transferase and CHST6 and CHST1 sulfotransferases to construct and elongate mono- and disulfated disaccharide units [-&gt;3Galbeta1-&gt;4(6-sulfoGlcNAcbeta)1-&gt;] and [-&gt;3(6-sulfoGalbeta)1-&gt;4(6-sulfoGlcNAcbeta)1-&gt;] within keratan sulfate polymer. Transfers Gal residue via a beta1-&gt;4 linkage to terminal 6-O-sulfoGlcNAc within the LacNac unit of core 2 O-glycans forming 6-sulfo-sialyl-Lewis X (sLex). May contribute to the generation of sLex epitope on mucin-type glycoproteins that serve as ligands for SELL/L-selectin, a major regulator of leukocyte migration. In the biosynthesis pathway of neolacto-series glycosphingolipids, transfers Gal residue via a beta1-&gt;4 linkage to terminal GlcNAc of a lactotriaosylceramide (Lc3Cer) acceptor to form a neolactotetraosylceramide. The polypeptide is Beta-1,4-galactosyltransferase 4 (B4galt4) (Rattus norvegicus (Rat)).